Here is a 343-residue protein sequence, read N- to C-terminus: Replication initiation protein (343 aa).

Residues 42-61 are disordered; the sequence is ERKRTKRRRGEHSTKPKCEN.

Probably functions as an initiator for the IncI1 ColIb-P9 replicon. The chain is Replication initiation protein (repZ) from Escherichia coli.